Consider the following 346-residue polypeptide: Elongation factor Ts (346 aa).

The interval 80–83 is involved in Mg(2+) ion dislocation from EF-Tu; the sequence is TDFV.

It belongs to the EF-Ts family.

The protein resides in the cytoplasm. Its function is as follows. Associates with the EF-Tu.GDP complex and induces the exchange of GDP to GTP. It remains bound to the aminoacyl-tRNA.EF-Tu.GTP complex up to the GTP hydrolysis stage on the ribosome. This Streptococcus pneumoniae (strain 70585) protein is Elongation factor Ts.